An 875-amino-acid polypeptide reads, in one-letter code: SPbeta prophage-derived uncharacterized protein YomG (875 aa).

Positions 351 to 381 form a coiled coil; it reads AKKAEISRINSQITNISQEIEKLKDRLSMDK. The Fibronectin type-III domain maps to 537–648; the sequence is PVANPTILNN…SIDSSGRILS (112 aa).

This chain is SPbeta prophage-derived uncharacterized protein YomG (yomG), found in Bacillus subtilis (strain 168).